The primary structure comprises 525 residues: Chromosomal replication initiator protein DnaA (525 aa).

The tract at residues 1–71 (MNDFWQHCSA…ADLAREFWNT (71 aa)) is domain I, interacts with DnaA modulators. Positions 71-188 (TPIEVQFVLD…GEADSMYERS (118 aa)) are domain II. Residues 160–182 (AAAGRRTWRPGPGAAPANGGEAD) are disordered. A compositionally biased stretch (low complexity) spans 169–181 (PGPGAAPANGGEA). The interval 189–405 (KLNPVLTFDN…GALRKILAYS (217 aa)) is domain III, AAA+ region. 4 residues coordinate ATP: Gly233, Gly235, Lys236, and Thr237. Positions 406-525 (KFHGREISIE…LHVLEQTLKG (120 aa)) are domain IV, binds dsDNA.

It belongs to the DnaA family. Oligomerizes as a right-handed, spiral filament on DNA at oriC.

The protein resides in the cytoplasm. Functionally, plays an essential role in the initiation and regulation of chromosomal replication. ATP-DnaA binds to the origin of replication (oriC) to initiate formation of the DNA replication initiation complex once per cell cycle. Binds the DnaA box (a 9 base pair repeat at the origin) and separates the double-stranded (ds)DNA. Forms a right-handed helical filament on oriC DNA; dsDNA binds to the exterior of the filament while single-stranded (ss)DNA is stabiized in the filament's interior. The ATP-DnaA-oriC complex binds and stabilizes one strand of the AT-rich DNA unwinding element (DUE), permitting loading of DNA polymerase. After initiation quickly degrades to an ADP-DnaA complex that is not apt for DNA replication. Binds acidic phospholipids. In Burkholderia cenocepacia (strain ATCC BAA-245 / DSM 16553 / LMG 16656 / NCTC 13227 / J2315 / CF5610) (Burkholderia cepacia (strain J2315)), this protein is Chromosomal replication initiator protein DnaA.